Here is a 350-residue protein sequence, read N- to C-terminus: Methionine aminopeptidase 1D, chloroplastic/mitochondrial (350 aa).

Residues 1–49 constitute a chloroplast and mitochondrion transit peptide; sequence MAGVKSLQPRLISSFLGNNSIRSTQPLIHLFRFDLGRRHVSMQLSRTFS. Glycine 50 bears the N-acetylglycine mark. The interval 71–90 is disordered; the sequence is RLRPGNVSPRRPVPGHITKP. Histidine 180 is a substrate binding site. Residues aspartate 197, aspartate 208, and histidine 271 each contribute to the a divalent metal cation site. Substrate is bound at residue histidine 278. Positions 303 and 334 each coordinate a divalent metal cation.

The protein belongs to the peptidase M24A family. Methionine aminopeptidase type 1 subfamily. Co(2+) is required as a cofactor. Requires Zn(2+) as cofactor. Mn(2+) serves as cofactor. It depends on Fe(2+) as a cofactor. Ubiquitous. Preferentially expressed in green tissues.

The protein localises to the plastid. The protein resides in the chloroplast. It is found in the mitochondrion. It catalyses the reaction Release of N-terminal amino acids, preferentially methionine, from peptides and arylamides.. In terms of biological role, removes the N-terminal methionine from nascent proteins. The N-terminal methionine is often cleaved when the second residue in the primary sequence is small and uncharged (Met-Ala-, Cys, Gly, Pro, Ser, Thr, or Val). This is Methionine aminopeptidase 1D, chloroplastic/mitochondrial (MAP1D) from Arabidopsis thaliana (Mouse-ear cress).